Consider the following 219-residue polypeptide: MRSHISVMGKKEGMIHIFDKDGSLVACSVIRVEPNVVTQIKTKESDGYFSLQIGAEEMNAPAHTITKRVSKPKLGHLRKAGGRVFRFLKEVRGSEEALNGVSLGDAFGLEVFEDVSSVDVRGISKGKGFQGVMKKFGFRGGPGSHGSGFHRHAGSIGMRSTPGRCFPGSKRPSHMGAENVTVKNLEVIKVDLEKKVLLVKGAIPGARGSIVIVKHSSRT.

It belongs to the universal ribosomal protein uL3 family. In terms of assembly, part of the 50S ribosomal subunit. Forms a cluster with proteins L14 and L19.

One of the primary rRNA binding proteins, it binds directly near the 3'-end of the 23S rRNA, where it nucleates assembly of the 50S subunit. In Chlamydia pneumoniae (Chlamydophila pneumoniae), this protein is Large ribosomal subunit protein uL3.